A 287-amino-acid chain; its full sequence is Phycobilisome 32.1 kDa linker polypeptide, phycocyanin-associated, rod (287 aa).

The PBS-linker domain maps to 2-180; that stretch reads AITAAASRLG…LYRGYANSDR (179 aa). The CpcD-like domain maps to 235–287; it reads GRVYRIEVAGIRQPGYPGVRRSSTAFLVPYEQLSAKMQQLQRTGARIISVNPA.

It belongs to the phycobilisome linker protein family.

It is found in the cellular thylakoid membrane. In terms of biological role, rod linker protein, associated with phycocyanin. Linker polypeptides determine the state of aggregation and the location of the disk-shaped phycobiliprotein units within the phycobilisome and modulate their spectroscopic properties in order to mediate a directed and optimal energy transfer. The chain is Phycobilisome 32.1 kDa linker polypeptide, phycocyanin-associated, rod (cpcC) from Thermosynechococcus vestitus (strain NIES-2133 / IAM M-273 / BP-1).